Reading from the N-terminus, the 297-residue chain is Ribonuclease H2 subunit A (297 aa).

Positions 21-248 (PCVLGIDEAG…ASTIVEKRCV (228 aa)) constitute an RNase H type-2 domain. The a divalent metal cation site is built by Asp-27, Glu-28, and Asp-138.

This sequence belongs to the RNase HII family. Eukaryotic subfamily. Requires Mn(2+) as cofactor. The cofactor is Mg(2+).

The enzyme catalyses Endonucleolytic cleavage to 5'-phosphomonoester.. Catalytic subunit of RNase HII, an endonuclease that specifically degrades the RNA of RNA:DNA hybrids. Participates in DNA replication, possibly by mediating the removal of lagging-strand Okazaki fragment RNA primers during DNA replication. Mediates the excision of single ribonucleotides from DNA:RNA duplexes. This chain is Ribonuclease H2 subunit A (rnh-2), found in Caenorhabditis elegans.